We begin with the raw amino-acid sequence, 364 residues long: Nucleosome assembly protein 1;2 (364 aa).

Residues 32–86 adopt a coiled-coil conformation; it reads VESIKNTLQGLAARHTDVLESLEPKVRKRVEVLREIQSQHDDLEAKFFEERAALE. A Nuclear export signal motif is present at residues 53 to 68; the sequence is LEPKVRKRVEVLREIQ. The Nuclear localization signal motif lies at 227 to 232; sequence KKKPKK. Disordered regions lie at residues 250 to 269 and 301 to 364; these read FNFF…DEDT and GEAA…CKQQ. 2 stretches are compositionally biased toward acidic residues: residues 259 to 269 and 304 to 340; these read PDDDEEIDEDT and AQDE…DDED. Position 361 is a cysteine methyl ester (Cys361). Cys361 carries the S-farnesyl cysteine lipid modification. Positions 362-364 are cleaved as a propeptide — removed in mature form; sequence KQQ.

This sequence belongs to the nucleosome assembly protein (NAP) family. In terms of assembly, binds preferentially histone H1 in vitro. As to expression, highly expressed in tissues exhibiting active cell-division activities, such as root and shoot meristems and young flowers.

It localises to the nucleus. It is found in the cytoplasm. Functionally, may modulate chromatin structure by regulation of nucleosome assembly/disassembly. The sequence is that of Nucleosome assembly protein 1;2 (NAP1;2) from Oryza sativa subsp. indica (Rice).